Consider the following 505-residue polypeptide: Apolipoprotein N-acyltransferase (505 aa).

6 helical membrane passes run 23–43 (LLALAPFDIWPLAVLSIAVLY), 58–78 (GWWFGFGLYGAGTWWIYVSMN), 85–105 (PLLAIVLLLAFFAALAWFFAL), 125–145 (LCFAALWLLQEAFRGWFLTGF), 162–182 (LAPLGGVWLISFTLALTAALL), and 192–212 (PSFLAVASVLLLAPWGLGLAL). The 240-residue stretch at 230 to 469 (IQGNVEQDLK…QAVLYGEVVP (240 aa)) folds into the CN hydrolase domain. Glu-269 functions as the Proton acceptor in the catalytic mechanism. The active site involves Lys-329. Cys-381 acts as the Nucleophile in catalysis. The chain crosses the membrane as a helical span at residues 482–502 (WPLAIVCALLLGWALLAGRIA).

Belongs to the CN hydrolase family. Apolipoprotein N-acyltransferase subfamily.

It localises to the cell inner membrane. The catalysed reaction is N-terminal S-1,2-diacyl-sn-glyceryl-L-cysteinyl-[lipoprotein] + a glycerophospholipid = N-acyl-S-1,2-diacyl-sn-glyceryl-L-cysteinyl-[lipoprotein] + a 2-acyl-sn-glycero-3-phospholipid + H(+). The protein operates within protein modification; lipoprotein biosynthesis (N-acyl transfer). Catalyzes the phospholipid dependent N-acylation of the N-terminal cysteine of apolipoprotein, the last step in lipoprotein maturation. The sequence is that of Apolipoprotein N-acyltransferase from Pseudomonas putida (strain ATCC 47054 / DSM 6125 / CFBP 8728 / NCIMB 11950 / KT2440).